A 331-amino-acid chain; its full sequence is Lipoyl synthase (331 aa).

Positions 57, 62, 68, 83, 87, 90, and 294 each coordinate [4Fe-4S] cluster. A Radical SAM core domain is found at 69-283; the sequence is WEDREATFLI…KAEAEAIGFL (215 aa).

It belongs to the radical SAM superfamily. Lipoyl synthase family. The cofactor is [4Fe-4S] cluster.

The protein localises to the cytoplasm. The enzyme catalyses [[Fe-S] cluster scaffold protein carrying a second [4Fe-4S](2+) cluster] + N(6)-octanoyl-L-lysyl-[protein] + 2 oxidized [2Fe-2S]-[ferredoxin] + 2 S-adenosyl-L-methionine + 4 H(+) = [[Fe-S] cluster scaffold protein] + N(6)-[(R)-dihydrolipoyl]-L-lysyl-[protein] + 4 Fe(3+) + 2 hydrogen sulfide + 2 5'-deoxyadenosine + 2 L-methionine + 2 reduced [2Fe-2S]-[ferredoxin]. The protein operates within protein modification; protein lipoylation via endogenous pathway; protein N(6)-(lipoyl)lysine from octanoyl-[acyl-carrier-protein]: step 2/2. Its function is as follows. Catalyzes the radical-mediated insertion of two sulfur atoms into the C-6 and C-8 positions of the octanoyl moiety bound to the lipoyl domains of lipoate-dependent enzymes, thereby converting the octanoylated domains into lipoylated derivatives. This is Lipoyl synthase from Clavibacter michiganensis subsp. michiganensis (strain NCPPB 382).